The sequence spans 431 residues: Phosphoribosylamine--glycine ligase (431 aa).

The region spanning 109–316 (KDFLARHGIP…LVDLLEAAID (208 aa)) is the ATP-grasp domain. Residue 135 to 196 (VREKGTPIVV…EEFLDGEEAS (62 aa)) participates in ATP binding. Mg(2+) contacts are provided by glutamate 286 and asparagine 288.

The protein belongs to the GARS family. The cofactor is Mg(2+). Mn(2+) is required as a cofactor.

It carries out the reaction 5-phospho-beta-D-ribosylamine + glycine + ATP = N(1)-(5-phospho-beta-D-ribosyl)glycinamide + ADP + phosphate + H(+). Its pathway is purine metabolism; IMP biosynthesis via de novo pathway; N(1)-(5-phospho-D-ribosyl)glycinamide from 5-phospho-alpha-D-ribose 1-diphosphate: step 2/2. The polypeptide is Phosphoribosylamine--glycine ligase (Xanthomonas axonopodis pv. citri (strain 306)).